A 394-amino-acid chain; its full sequence is Mannosyl-3-phosphoglycerate synthase (394 aa).

This sequence belongs to the glycosyltransferase 2 family. Mg(2+) serves as cofactor.

It localises to the cytoplasm. The enzyme catalyses (2R)-3-phosphoglycerate + GDP-alpha-D-mannose = 2-O-(alpha-D-mannosyl)-3-phosphoglycerate + GDP + H(+). The protein operates within carbohydrate biosynthesis; 2-(alpha-D-mannosyl)-D-glycerate biosynthesis; 2-(alpha-D-mannosyl)-D-glycerate from GDP-alpha-D-mannose (MPG route): step 1/2. Transfers a mannosyl group from GDP-mannose to phosphoglycerate to form mannosyl-3-phosphoglycerate (MPG). The enzyme is absolutely specific for GDP-mannose and 3-phosphoglycerate, and transfers the mannosyl group with retention of configuration. The polypeptide is Mannosyl-3-phosphoglycerate synthase (mngA) (Pyrococcus horikoshii (strain ATCC 700860 / DSM 12428 / JCM 9974 / NBRC 100139 / OT-3)).